The chain runs to 246 residues: Apolipoprotein L domain-containing protein 1 (246 aa).

2 helical membrane passes run 50 to 72 (SLAA…IVGL) and 89 to 109 (GLGV…SLIF). Residues 193-220 (LKAKIQKLSESLESCTGALDELSEQLES) are a coiled coil.

It belongs to the apolipoprotein L family. Present at low levels in brain vascular cells (at protein level).

Its subcellular location is the cell membrane. It is found in the cell junction. The protein resides in the cytoplasmic vesicle. The protein localises to the secretory vesicle. In terms of biological role, is a modulator of endothelial barrier permeability, required for proper organization of endothelial cell-cell junctions and cytoskeleton. It also plays a role in the modulation of secretory autophagy. May affect blood-brain barrier permeability. This chain is Apolipoprotein L domain-containing protein 1 (Apold1), found in Rattus norvegicus (Rat).